A 204-amino-acid chain; its full sequence is Dual specificity protein phosphatase 18 (204 aa).

Residues 19-160 (GLSQITKSLF…LIHYEFQLFG (142 aa)) enclose the Tyrosine-protein phosphatase domain. Positions 95-141 (MKQGRTLLHCAAGVSRSAALCLAYLMKYHVMSLLDAHAWTKSRRPII) are sufficient for mitochondrial localization. Cys104 serves as the catalytic Phosphocysteine intermediate.

This sequence belongs to the protein-tyrosine phosphatase family. Non-receptor class dual specificity subfamily.

It is found in the cytoplasm. Its subcellular location is the nucleus. It localises to the mitochondrion inner membrane. The enzyme catalyses O-phospho-L-tyrosyl-[protein] + H2O = L-tyrosyl-[protein] + phosphate. It catalyses the reaction O-phospho-L-seryl-[protein] + H2O = L-seryl-[protein] + phosphate. The catalysed reaction is O-phospho-L-threonyl-[protein] + H2O = L-threonyl-[protein] + phosphate. Can dephosphorylate single and diphosphorylated synthetic MAPK peptides, with preference for the phosphotyrosine and diphosphorylated forms over phosphothreonine. In vitro, dephosphorylates p-nitrophenyl phosphate (pNPP). In Rattus norvegicus (Rat), this protein is Dual specificity protein phosphatase 18 (Dusp18).